Consider the following 285-residue polypeptide: Probable endonuclease 4 (285 aa).

Zn(2+) is bound by residues His69, His109, Glu145, Asp179, His182, His216, Asp229, His231, and Glu261.

This sequence belongs to the AP endonuclease 2 family. Requires Zn(2+) as cofactor.

It carries out the reaction Endonucleolytic cleavage to 5'-phosphooligonucleotide end-products.. Its function is as follows. Endonuclease IV plays a role in DNA repair. It cleaves phosphodiester bonds at apurinic or apyrimidinic (AP) sites, generating a 3'-hydroxyl group and a 5'-terminal sugar phosphate. The polypeptide is Probable endonuclease 4 (Escherichia coli (strain SMS-3-5 / SECEC)).